The sequence spans 353 residues: Serine/threonine-protein phosphatase 2A activator 1 (353 aa).

Residues 331-353 (ANNATTKMPPPLSTSTSRFIHRR) are disordered. Residues 343-353 (STSTSRFIHRR) are compositionally biased toward polar residues.

The protein belongs to the PTPA-type PPIase family.

The protein resides in the cytoplasm. Its subcellular location is the nucleus. The enzyme catalyses [protein]-peptidylproline (omega=180) = [protein]-peptidylproline (omega=0). Its function is as follows. PPIases accelerate the folding of proteins. It catalyzes the cis-trans isomerization of proline imidic peptide bonds in oligopeptides. Acts as a regulatory subunit for PP2A-like phosphatases modulating their activity or substrate specificity, probably by inducing a conformational change in the catalytic subunit, a direct target of the PPIase. Can reactivate inactive phosphatase PP2A-phosphatase methylesterase complexes (PP2Ai) in presence of ATP and Mg(2+) by dissociating the inactive form from the complex. The sequence is that of Serine/threonine-protein phosphatase 2A activator 1 (RRD1) from Kluyveromyces lactis (strain ATCC 8585 / CBS 2359 / DSM 70799 / NBRC 1267 / NRRL Y-1140 / WM37) (Yeast).